A 275-amino-acid polypeptide reads, in one-letter code: 3-methyl-2-oxobutanoate hydroxymethyltransferase (275 aa).

Residues Asp49 and Asp88 each contribute to the Mg(2+) site. Residues 49–50, Asp88, and Lys118 contribute to the 3-methyl-2-oxobutanoate site; that span reads DS. Glu120 contacts Mg(2+). The active-site Proton acceptor is the Glu187.

Belongs to the PanB family. Homodecamer; pentamer of dimers. Requires Mg(2+) as cofactor.

It is found in the cytoplasm. The catalysed reaction is 3-methyl-2-oxobutanoate + (6R)-5,10-methylene-5,6,7,8-tetrahydrofolate + H2O = 2-dehydropantoate + (6S)-5,6,7,8-tetrahydrofolate. It functions in the pathway cofactor biosynthesis; (R)-pantothenate biosynthesis; (R)-pantoate from 3-methyl-2-oxobutanoate: step 1/2. Catalyzes the reversible reaction in which hydroxymethyl group from 5,10-methylenetetrahydrofolate is transferred onto alpha-ketoisovalerate to form ketopantoate. The polypeptide is 3-methyl-2-oxobutanoate hydroxymethyltransferase (Nitrobacter hamburgensis (strain DSM 10229 / NCIMB 13809 / X14)).